Here is a 547-residue protein sequence, read N- to C-terminus: DEAD-box ATP-dependent RNA helicase 31 (547 aa).

The segment covering 1 to 34 (MFDFGLSEDDSELGEVDEDDGPSGFEDDLFDDEG) has biased composition (acidic residues). Residues 1 to 74 (MFDFGLSEDD…HTRESGGGDS (74 aa)) form a disordered region. The span at 53–70 (IKGEPIDQEGVVHTRESG) shows a compositional bias: basic and acidic residues. The short motif at 79–107 (TRFDECSLSPLTLKGVKAAGYERMTAVQE) is the Q motif element. The 184-residue stretch at 110 to 293 (LPIILKGKDV…HIAMKRDLEF (184 aa)) folds into the Helicase ATP-binding domain. 123–130 (AKTGTGKT) lines the ATP pocket. The DEAD box motif lies at 241–244 (DEAD). One can recognise a Helicase C-terminal domain in the interval 327-478 (LLTDHISENV…TKRKVEKALA (152 aa)).

It belongs to the DEAD box helicase family.

The enzyme catalyses ATP + H2O = ADP + phosphate + H(+). The polypeptide is DEAD-box ATP-dependent RNA helicase 31 (Oryza sativa subsp. japonica (Rice)).